A 1452-amino-acid chain; its full sequence is Protein clueless (1452 aa).

Disordered regions lie at residues 1–93 (MALE…SNGH) and 266–288 (KKTRPDSVDCTPPEYVTPGVSEP). A compositionally biased stretch (low complexity) spans 8 to 24 (KNSNATATSDATATKAS). The span at 42–59 (PIPNSNHQNSNQNLVNGN) shows a compositional bias: polar residues. The span at 68-77 (AKKKGKKNRN) shows a compositional bias: basic residues. Ser272 carries the phosphoserine modification. Residues 426 to 668 (RAEDAFSSKL…RTFPPDVNFL (243 aa)) enclose the Clu domain. Disordered regions lie at residues 726-775 (KQSE…GDTK), 962-1013 (AVSS…SSVS), and 1414-1452 (ANNNGEAEDAVPKDVEEQKEAGTQLTNGEKAAATEATSS). Over residues 750–766 (GADKTDVKEEKNEENEK) the composition is skewed to basic and acidic residues. Over residues 970-985 (KKRGNGGKHNKHKSSK) the composition is skewed to basic residues. Residues 990–1013 (QQQQQATGNQNGSSSGSSNGSSVS) show a composition bias toward low complexity. Positions 1423-1433 (AVPKDVEEQKE) are enriched in basic and acidic residues.

This sequence belongs to the CLU family.

It is found in the cytoplasm. Its function is as follows. mRNA-binding protein involved in proper cytoplasmic distribution of mitochondria. The sequence is that of Protein clueless from Drosophila erecta (Fruit fly).